We begin with the raw amino-acid sequence, 98 residues long: MARITVEDCLEVVNNRFELVMMASKRARQLANGVPPLIENNSEDKPTVLALREIAARKINSKMIDEIEKAERERTEREAMEWAAAEVVADEDISKSDD.

Belongs to the RNA polymerase subunit omega family. In terms of assembly, the RNAP catalytic core consists of 2 alpha, 1 beta, 1 beta' and 1 omega subunit. When a sigma factor is associated with the core the holoenzyme is formed, which can initiate transcription.

The enzyme catalyses RNA(n) + a ribonucleoside 5'-triphosphate = RNA(n+1) + diphosphate. In terms of biological role, promotes RNA polymerase assembly. Latches the N- and C-terminal regions of the beta' subunit thereby facilitating its interaction with the beta and alpha subunits. In Xylella fastidiosa (strain M12), this protein is DNA-directed RNA polymerase subunit omega.